We begin with the raw amino-acid sequence, 222 residues long: GEM-like protein 4 (222 aa).

The region spanning 95–173 is the GRAM domain; that stretch reads KIFKRLFRVS…CKIDRVNQSQ (79 aa).

It belongs to the GEM family.

The chain is GEM-like protein 4 from Arabidopsis thaliana (Mouse-ear cress).